A 646-amino-acid polypeptide reads, in one-letter code: Exoribonuclease 2 (646 aa).

The RNB domain maps to 191-518 (RIDLTALDFV…NHRLLKAIIQ (328 aa)). One can recognise an S1 motif domain in the interval 563 to 645 (DKTFSAEIVD…ETRNIVARPV (83 aa)).

The protein belongs to the RNR ribonuclease family. RNase II subfamily.

It localises to the cytoplasm. The catalysed reaction is Exonucleolytic cleavage in the 3'- to 5'-direction to yield nucleoside 5'-phosphates.. Its function is as follows. Involved in mRNA degradation. Hydrolyzes single-stranded polyribonucleotides processively in the 3' to 5' direction. The chain is Exoribonuclease 2 from Xenorhabdus bovienii (strain SS-2004) (Xenorhabdus nematophila subsp. bovienii).